The sequence spans 32 residues: Lectin (32 aa).

The protein belongs to the leguminous lectin family. In terms of assembly, homotetramer.

In terms of biological role, metalloglycoprotein, containing Ca, Mg, Mn, and Zn and the carbohydrates galactose, glucosamine, mannose, and fucose. It agglutinates erythrocytes of blood group A1. This Macrotyloma axillare (Perennial horse gram) protein is Lectin.